We begin with the raw amino-acid sequence, 210 residues long: Outer-membrane lipoprotein LolB (210 aa).

Residues 1 to 18 (MKKFTKILSLSTLLFLAG) form the signal peptide. A lipid anchor (N-palmitoyl cysteine) is attached at Cys-19. Cys-19 carries S-diacylglycerol cysteine lipidation.

This sequence belongs to the LolB family. As to quaternary structure, monomer.

Its subcellular location is the cell outer membrane. Functionally, plays a critical role in the incorporation of lipoproteins in the outer membrane after they are released by the LolA protein. This Actinobacillus pleuropneumoniae serotype 5b (strain L20) protein is Outer-membrane lipoprotein LolB.